Consider the following 401-residue polypeptide: G2/mitotic-specific cyclin-B1 (401 aa).

Belongs to the cyclin family. Cyclin AB subfamily. Interacts with the CDK1 protein kinase to form a serine/threonine kinase holoenzyme complex also known as maturation promoting factor (MPF). The cyclin subunit imparts substrate specificity to the complex.

In terms of biological role, essential for the control of the cell cycle at the G2/M (mitosis) transition. This chain is G2/mitotic-specific cyclin-B1 (ccnb1), found in Oryzias luzonensis (Luzon ricefish).